Consider the following 468-residue polypeptide: ATP synthase subunit beta (468 aa).

Residue 155 to 162 (GGAGVGKT) coordinates ATP.

This sequence belongs to the ATPase alpha/beta chains family. As to quaternary structure, F-type ATPases have 2 components, CF(1) - the catalytic core - and CF(0) - the membrane proton channel. CF(1) has five subunits: alpha(3), beta(3), gamma(1), delta(1), epsilon(1). CF(0) has three main subunits: a(1), b(2) and c(9-12). The alpha and beta chains form an alternating ring which encloses part of the gamma chain. CF(1) is attached to CF(0) by a central stalk formed by the gamma and epsilon chains, while a peripheral stalk is formed by the delta and b chains.

The protein localises to the cell inner membrane. It carries out the reaction ATP + H2O + 4 H(+)(in) = ADP + phosphate + 5 H(+)(out). Functionally, produces ATP from ADP in the presence of a proton gradient across the membrane. The catalytic sites are hosted primarily by the beta subunits. The chain is ATP synthase subunit beta from Thermotoga petrophila (strain ATCC BAA-488 / DSM 13995 / JCM 10881 / RKU-1).